The following is a 199-amino-acid chain: dTTP/UTP pyrophosphatase (199 aa).

The active-site Proton acceptor is the Asp-73.

Belongs to the Maf family. YhdE subfamily. Requires a divalent metal cation as cofactor.

It localises to the cytoplasm. The catalysed reaction is dTTP + H2O = dTMP + diphosphate + H(+). It carries out the reaction UTP + H2O = UMP + diphosphate + H(+). Nucleoside triphosphate pyrophosphatase that hydrolyzes dTTP and UTP. May have a dual role in cell division arrest and in preventing the incorporation of modified nucleotides into cellular nucleic acids. The protein is dTTP/UTP pyrophosphatase of Caldicellulosiruptor bescii (strain ATCC BAA-1888 / DSM 6725 / KCTC 15123 / Z-1320) (Anaerocellum thermophilum).